Here is a 91-residue protein sequence, read N- to C-terminus: Small ribosomal subunit protein bS16 (91 aa).

Belongs to the bacterial ribosomal protein bS16 family.

The sequence is that of Small ribosomal subunit protein bS16 from Staphylococcus epidermidis (strain ATCC 35984 / DSM 28319 / BCRC 17069 / CCUG 31568 / BM 3577 / RP62A).